A 957-amino-acid polypeptide reads, in one-letter code: Glycine dehydrogenase (decarboxylating) (957 aa).

An N6-(pyridoxal phosphate)lysine modification is found at lysine 708.

The protein belongs to the GcvP family. The glycine cleavage system is composed of four proteins: P, T, L and H. Pyridoxal 5'-phosphate serves as cofactor.

The enzyme catalyses N(6)-[(R)-lipoyl]-L-lysyl-[glycine-cleavage complex H protein] + glycine + H(+) = N(6)-[(R)-S(8)-aminomethyldihydrolipoyl]-L-lysyl-[glycine-cleavage complex H protein] + CO2. In terms of biological role, the glycine cleavage system catalyzes the degradation of glycine. The P protein binds the alpha-amino group of glycine through its pyridoxal phosphate cofactor; CO(2) is released and the remaining methylamine moiety is then transferred to the lipoamide cofactor of the H protein. In Shigella flexneri, this protein is Glycine dehydrogenase (decarboxylating).